Here is a 1121-residue protein sequence, read N- to C-terminus: Peroxisomal ATPase PEX1 (1121 aa).

Disordered stretches follow at residues Ser187 to Glu221 and Ser1099 to Met1121. Over residues Ser205–Thr217 the composition is skewed to low complexity.

This sequence belongs to the AAA ATPase family. In terms of assembly, interacts with PEX6; forming the PEX1-PEX6 AAA ATPase complex, which is composed of a heterohexamer formed by a trimer of PEX1-PEX6 dimers.

Its subcellular location is the membrane. It catalyses the reaction ATP + H2O = ADP + phosphate + H(+). Component of the PEX1-PEX6 AAA ATPase complex involved in peroxisome biosynthesis. The complex acts as a protein dislocase complex that mediates the ATP-dependent extraction of the PEX5 receptor from peroxisomal membranes, an essential step for PEX5 recycling. Specifically recognizes PEX5 monoubiquitinated at 'Cys-6', and pulls it out of the peroxisome lumen through the PEX2-PEX10-PEX12 retrotranslocation channel. Extraction by the PEX1-PEX6 AAA ATPase complex is accompanied by unfolding of the TPR repeats and release of bound cargo from PEX5. This Komagataella phaffii (strain GS115 / ATCC 20864) (Yeast) protein is Peroxisomal ATPase PEX1.